Consider the following 147-residue polypeptide: Large ribosomal subunit protein bL9 (147 aa).

It belongs to the bacterial ribosomal protein bL9 family.

Binds to the 23S rRNA. The sequence is that of Large ribosomal subunit protein bL9 from Marinomonas sp. (strain MWYL1).